Here is a 378-residue protein sequence, read N- to C-terminus: Protein RecA (378 aa).

65-72 is a binding site for ATP; the sequence is GPESSGKT. The tract at residues 325-378 is disordered; it reads AYGMDQTGEEDDQADDKSKDKATKPSDKSQAQAKPKKPVATETSLDLDDSKTDK. The segment covering 339 to 351 has biased composition (basic and acidic residues); the sequence is DDKSKDKATKPSD.

Belongs to the RecA family.

It localises to the cytoplasm. Its function is as follows. Can catalyze the hydrolysis of ATP in the presence of single-stranded DNA, the ATP-dependent uptake of single-stranded DNA by duplex DNA, and the ATP-dependent hybridization of homologous single-stranded DNAs. It interacts with LexA causing its activation and leading to its autocatalytic cleavage. The polypeptide is Protein RecA (Lactiplantibacillus pentosus (Lactobacillus pentosus)).